A 346-amino-acid polypeptide reads, in one-letter code: Parapinopsin (346 aa).

Topologically, residues 1 to 29 are extracellular; the sequence is MASIILINFSETDTLHLGSVNDHIMPRIG. N-linked (GlcNAc...) asparagine glycosylation occurs at Asn-8. A helical transmembrane segment spans residues 30 to 54; the sequence is YTILSIIMALSSTFGIILNMVVIIV. Topologically, residues 55-66 are cytoplasmic; the sequence is TVRYKQLRQPLN. The chain crosses the membrane as a helical span at residues 67–91; that stretch reads YALVNLAVADLGCPVFGGLLTAVTN. Residues 92–106 are Extracellular-facing; the sequence is AMGYFSLGRVGCVLE. Residues Cys-103 and Cys-180 are joined by a disulfide bond. Residues 107–126 traverse the membrane as a helical segment; it reads GFAVAFFGIAGLCSVAVIAV. The Cytoplasmic segment spans residues 127-145; that stretch reads DRYMVVCRPLGAVMFQTKH. Residues 146–169 traverse the membrane as a helical segment; that stretch reads ALAGVVFSWVWSFIWNTPPLFGWG. Topologically, residues 170-193 are extracellular; it reads SYQLEGVMTSCAPNWYRRDPVNVS. Asn-191 is a glycosylation site (N-linked (GlcNAc...) asparagine). Residues 194–221 traverse the membrane as a helical segment; that stretch reads YILCYFMLCFALPFATIIFSYMHLLHTL. Residues 222-244 are Cytoplasmic-facing; that stretch reads WQVAKLQVADSGSTAKVEVQVAR. A helical transmembrane segment spans residues 245 to 268; it reads MVVIMVMAFLLTWLPYAAFALTVI. Residues 269–276 lie on the Extracellular side of the membrane; sequence IDSNIYIN. The chain crosses the membrane as a helical span at residues 277–301; the sequence is PVIGTIPAYLAKSSTVFNPIIYIFM. Residue Lys-288 is modified to N6-(retinylidene)lysine. Over 302–346 the chain is Cytoplasmic; the sequence is NRQFRDYALPCLLCGKNPWAAKEGRDSDTNTLTTTVSKNTSVSPL. Residue Cys-315 is the site of S-palmitoyl cysteine attachment. Residues 325-346 form a disordered region; it reads GRDSDTNTLTTTVSKNTSVSPL. Low complexity predominate over residues 330-346; that stretch reads TNTLTTTVSKNTSVSPL.

The protein belongs to the G-protein coupled receptor 1 family. Opsin subfamily. Phosphorylated on some or all of the serine and threonine residues present in the C-terminal region. As to expression, parapineal organ.

It localises to the membrane. This chain is Parapinopsin, found in Ictalurus punctatus (Channel catfish).